The following is a 305-amino-acid chain: Ribonuclease BN (305 aa).

Zn(2+)-binding residues include His-64, His-66, Asp-68, His-69, His-141, Asp-212, and His-270. The active-site Proton acceptor is the Asp-68.

It belongs to the RNase Z family. RNase BN subfamily. In terms of assembly, homodimer. Zn(2+) is required as a cofactor.

In terms of biological role, zinc phosphodiesterase, which has both exoribonuclease and endoribonuclease activities. This Enterobacter sp. (strain 638) protein is Ribonuclease BN.